The primary structure comprises 212 residues: MADFKIVISDPASKKVVPAKVKVKLVDNVQSEEGEKEGRTLPVCLVNPKTKEKLGADQFITVEIQKQEGDKKVKVKVHFIARESAEVPEGEIHASKGLTEKFGAEEFEAVAYRTKSFQLNVDQGQVNLVGSKIGDNFTLSVGGIALNLAITGGSDNTGFPMRPDVQGAAKRRILLAGPPGFIPTEDGERRRKIVRGNVISAENVQINCVIVR.

Belongs to the eukaryotic ribosomal protein eS6 family.

This chain is Small ribosomal subunit protein eS6, found in Metallosphaera sedula (strain ATCC 51363 / DSM 5348 / JCM 9185 / NBRC 15509 / TH2).